The sequence spans 264 residues: tRNA pseudouridine synthase A (264 aa).

Asp51 (nucleophile) is an active-site residue. Position 109 (Tyr109) interacts with substrate.

It belongs to the tRNA pseudouridine synthase TruA family. As to quaternary structure, homodimer.

It carries out the reaction uridine(38/39/40) in tRNA = pseudouridine(38/39/40) in tRNA. In terms of biological role, formation of pseudouridine at positions 38, 39 and 40 in the anticodon stem and loop of transfer RNAs. The sequence is that of tRNA pseudouridine synthase A from Pseudoalteromonas translucida (strain TAC 125).